The chain runs to 230 residues: UPF0173 metal-dependent hydrolase Rsph17025_2229 (230 aa).

This sequence belongs to the UPF0173 family.

In Cereibacter sphaeroides (strain ATCC 17025 / ATH 2.4.3) (Rhodobacter sphaeroides), this protein is UPF0173 metal-dependent hydrolase Rsph17025_2229.